We begin with the raw amino-acid sequence, 389 residues long: tRNA(Met) cytidine acetate ligase (389 aa).

Residues 8-21, Gly97, Asn153, and Arg176 contribute to the ATP site; that span reads IAEF…HEYL.

This sequence belongs to the TmcAL family.

It is found in the cytoplasm. The enzyme catalyses cytidine(34) in elongator tRNA(Met) + acetate + ATP = N(4)-acetylcytidine(34) in elongator tRNA(Met) + AMP + diphosphate. Catalyzes the formation of N(4)-acetylcytidine (ac(4)C) at the wobble position of elongator tRNA(Met), using acetate and ATP as substrates. First activates an acetate ion to form acetyladenylate (Ac-AMP) and then transfers the acetyl group to tRNA to form ac(4)C34. The chain is tRNA(Met) cytidine acetate ligase from Lactococcus lactis subsp. cremoris (strain SK11).